Consider the following 129-residue polypeptide: Gem-associated protein 7 (129 aa).

Met1 carries the N-acetylmethionine modification. The SUZ-C domain occupies 1–31 (MQSPLTIPVPVPVLRLPRGPDGFSRGFASDG). Residues 63-129 (RYLRSLLAMV…SDIISYSFKL (67 aa)) enclose the Sm domain.

This sequence belongs to the gemin-7 family. In terms of assembly, part of the core SMN complex that contains SMN1, GEMIN2/SIP1, DDX20/GEMIN3, GEMIN4, GEMIN5, GEMIN6, GEMIN7, GEMIN8 and STRAP/UNRIP. Part of the SMN-Sm complex that contains SMN1, GEMIN2/SIP1, DDX20/GEMIN3, GEMIN4, GEMIN5, GEMIN6, GEMIN7, GEMIN8, STRAP/UNRIP and the Sm proteins SNRPB, SNRPD1, SNRPD2, SNRPD3, SNRPE, SNRPF and SNRPG. Interacts with GEMIN6; the interaction is direct. Interacts with STRAP/UNRIP; the interaction is direct. Interacts with GEMIN8; the interaction is direct. Interacts with SNRPB, SNRPD2, SNRPD3 and SNRPE; the interaction is direct.

It is found in the nucleus. Its subcellular location is the nucleoplasm. The protein localises to the gem. It localises to the cytoplasm. The SMN complex catalyzes the assembly of small nuclear ribonucleoproteins (snRNPs), the building blocks of the spliceosome, and thereby plays an important role in the splicing of cellular pre-mRNAs. Most spliceosomal snRNPs contain a common set of Sm proteins SNRPB, SNRPD1, SNRPD2, SNRPD3, SNRPE, SNRPF and SNRPG that assemble in a heptameric protein ring on the Sm site of the small nuclear RNA to form the core snRNP (Sm core). In the cytosol, the Sm proteins SNRPD1, SNRPD2, SNRPE, SNRPF and SNRPG are trapped in an inactive 6S pICln-Sm complex by the chaperone CLNS1A that controls the assembly of the core snRNP. To assemble core snRNPs, the SMN complex accepts the trapped 5Sm proteins from CLNS1A forming an intermediate. Binding of snRNA inside 5Sm triggers eviction of the SMN complex, thereby allowing binding of SNRPD3 and SNRPB to complete assembly of the core snRNP. In Mus musculus (Mouse), this protein is Gem-associated protein 7 (Gemin7).